Consider the following 201-residue polypeptide: DeSI-like protein sdu1 (201 aa).

The PPPDE domain maps to 1-143 (MKVYINVYDL…AFPTITNALL (143 aa)). Residues His29 and Cys105 contribute to the active site. Residues 146–201 (GQKNTSDVDDSSDSSSDVDEETLIVSKSKKAHKDIPKFSAPPPSADLNNLITDSLP) form a disordered region. The segment covering 152–167 (DVDDSSDSSSDVDEET) has biased composition (acidic residues). A compositionally biased stretch (polar residues) spans 191-201 (DLNNLITDSLP).

It belongs to the DeSI family.

The protein resides in the cytoplasm. Has a role in meiosis. The chain is DeSI-like protein sdu1 (sdu1) from Schizosaccharomyces pombe (strain 972 / ATCC 24843) (Fission yeast).